Reading from the N-terminus, the 447-residue chain is UDP-glycosyltransferase 79B9 (447 aa).

Residues Ser260, 319–321, 336–344, and 358–361 contribute to the UDP-alpha-D-glucose site; these read VQQ, HCGFGSMWE, and LCDQ.

The protein belongs to the UDP-glycosyltransferase family.

The sequence is that of UDP-glycosyltransferase 79B9 (UGT79B9) from Arabidopsis thaliana (Mouse-ear cress).